Here is a 276-residue protein sequence, read N- to C-terminus: Mitochondrial outer membrane protein porin of 34 kDa (276 aa).

Belongs to the eukaryotic mitochondrial porin (TC 1.B.8.1) family.

Its subcellular location is the mitochondrion outer membrane. Forms a channel through the cell membrane that allows diffusion of small hydrophilic molecules. The channel adopts an open conformation at low or zero membrane potential and a closed conformation at potentials above 30-40 mV. The open state has a weak anion selectivity whereas the closed state is cation-selective. In Solanum tuberosum (Potato), this protein is Mitochondrial outer membrane protein porin of 34 kDa.